Consider the following 486-residue polypeptide: F420-non-reducing hydrogenase iron-sulfur subunit A (486 aa).

Ni(2+)-binding residues include Cys61 and Cys64.

Belongs to the [NiFe]/[NiFeSe] hydrogenase large subunit family. The F420-non-reducing hydrogenase is composed of three subunits; MvhA, MvhD and MvhG. It forms a complex with the heterodisulfide reductase (Hdr). Ni(2+) is required as a cofactor.

It localises to the cytoplasm. Functionally, part of a complex that provides reducing equivalents for heterodisulfide reductase. The protein is F420-non-reducing hydrogenase iron-sulfur subunit A (mvhA) of Archaeoglobus profundus (strain DSM 5631 / JCM 9629 / NBRC 100127 / Av18).